The following is a 393-amino-acid chain: Argininosuccinate synthase (393 aa).

Residues 10-18 (AYSGGLDTS) and Ala37 contribute to the ATP site. An L-citrulline-binding site is contributed by Tyr88. Residue Gly118 participates in ATP binding. Residues Thr120, Asn124, and Asp125 each coordinate L-aspartate. Asn124 serves as a coordination point for L-citrulline. 5 residues coordinate L-citrulline: Arg128, Ser176, Ser185, Glu261, and Tyr273.

This sequence belongs to the argininosuccinate synthase family. Type 1 subfamily. In terms of assembly, homotetramer.

The protein localises to the cytoplasm. The catalysed reaction is L-citrulline + L-aspartate + ATP = 2-(N(omega)-L-arginino)succinate + AMP + diphosphate + H(+). Its pathway is amino-acid biosynthesis; L-arginine biosynthesis; L-arginine from L-ornithine and carbamoyl phosphate: step 2/3. This Carsonella ruddii (strain PV) protein is Argininosuccinate synthase.